We begin with the raw amino-acid sequence, 215 residues long: 3-isopropylmalate dehydratase small subunit (215 aa).

This sequence belongs to the LeuD family. LeuD type 1 subfamily. In terms of assembly, heterodimer of LeuC and LeuD.

It carries out the reaction (2R,3S)-3-isopropylmalate = (2S)-2-isopropylmalate. The protein operates within amino-acid biosynthesis; L-leucine biosynthesis; L-leucine from 3-methyl-2-oxobutanoate: step 2/4. In terms of biological role, catalyzes the isomerization between 2-isopropylmalate and 3-isopropylmalate, via the formation of 2-isopropylmaleate. The polypeptide is 3-isopropylmalate dehydratase small subunit (Marinobacter nauticus (strain ATCC 700491 / DSM 11845 / VT8) (Marinobacter aquaeolei)).